The sequence spans 411 residues: MQFIDEARFVVRGGRGGDGAVSFHREKYRPRGGPDGGRGGDGGSVILRATEDLQTLERYSRRKVISAGRGGHGSGNNRAGERGRDVVLDVPVGTLVYDESGLLADLAEPGQTFVAARGGEGGRGNASFATSRRQAPAFRELGLPGEEREIRLELRVLSDVGLVGLPNAGKSSLLRALSAARPRVGDYPFTTLTPQLGVVEERGYARPFVVADIPGLISGASEGRGLGNRFLRHVARARLLVLVLDASEDPEGAERTLRAELGAAGLSGRPSLVVLNKVDLLDAELRAYLGEAFPGAPQVSARTGEGVGELARLLERRLRELERSAEAAPRPGHRVFRPSWRGLRVERENGAYVVSGREVERLALKTDWDNPEGVEHFQRELERRGVMGALRRAGAGEGDEVRIGDVSFEFR.

The Obg domain occupies 1–157 (MQFIDEARFV…REIRLELRVL (157 aa)). The disordered stretch occupies residues 20 to 45 (AVSFHREKYRPRGGPDGGRGGDGGSV). Residues 33–43 (GPDGGRGGDGG) show a composition bias toward gly residues. One can recognise an OBG-type G domain in the interval 158-330 (SDVGLVGLPN…LERSAEAAPR (173 aa)). GTP-binding positions include 164-171 (GLPNAGKS), 189-193 (FTTLT), 212-215 (DIPG), 276-279 (NKVD), and 311-313 (ARL). Mg(2+)-binding residues include Ser171 and Thr191. In terms of domain architecture, OCT spans 335–411 (VFRPSWRGLR…RIGDVSFEFR (77 aa)).

It belongs to the TRAFAC class OBG-HflX-like GTPase superfamily. OBG GTPase family. In terms of assembly, monomer. The cofactor is Mg(2+).

It is found in the cytoplasm. An essential GTPase which binds GTP, GDP and possibly (p)ppGpp with moderate affinity, with high nucleotide exchange rates and a fairly low GTP hydrolysis rate. Plays a role in control of the cell cycle, stress response, ribosome biogenesis and in those bacteria that undergo differentiation, in morphogenesis control. The chain is GTPase Obg from Rubrobacter xylanophilus (strain DSM 9941 / JCM 11954 / NBRC 16129 / PRD-1).